We begin with the raw amino-acid sequence, 422 residues long: Protein arginine methyltransferase NDUFAF7, mitochondrial (422 aa).

The N-terminal 28 residues, 1-28 (MRTLLRLKRLMPEVLWTKRSCSSSSINK), are a transit peptide targeting the mitochondrion.

It belongs to the NDUFAF7 family.

Its subcellular location is the mitochondrion. The catalysed reaction is L-arginyl-[protein] + 2 S-adenosyl-L-methionine = N(omega),N(omega)'-dimethyl-L-arginyl-[protein] + 2 S-adenosyl-L-homocysteine + 2 H(+). Arginine methyltransferase involved in the assembly or stability of mitochondrial NADH:ubiquinone oxidoreductase complex (complex I). Acts by mediating symmetric dimethylation of 'Arg-118' of ndufs2 after it assembles into the complex I, stabilizing the early intermediate complex. The protein is Protein arginine methyltransferase NDUFAF7, mitochondrial of Danio rerio (Zebrafish).